We begin with the raw amino-acid sequence, 331 residues long: Septin homolog spn2 (331 aa).

Residues 29 to 301 form the Septin-type G domain; the sequence is RGFQFNVMVV…EKFRFKQLSS (273 aa). The G1 motif stretch occupies residues 39–46; the sequence is GPSGSGKS. GTP-binding positions include 39-46, Thr-73, Gly-99, 179-187, Gly-235, and Arg-250; these read GPSGSGKS and KSDSLTLEE. The interval 96-99 is G3 motif; the sequence is DTPG. The interval 178–181 is G4 motif; sequence AKSD. Positions 311–331 are disordered; the sequence is RMGSPAPVYPSEPHLHTATAQ.

This sequence belongs to the TRAFAC class TrmE-Era-EngA-EngB-Septin-like GTPase superfamily. Septin GTPase family. Component of the septin complex composed of two copies of each spn1, spn2, spn3 and spn4. Component of the sporulation-specific septin complex composed of at least spn2, spn5, spn6 and spn7.

It localises to the cytoplasm. The protein localises to the cell cortex. The protein resides in the forespore membrane. Functionally, plays a role in the cell cycle. Involved in a late stage of septum formation leading to the separation of the daughter cells. Involved in the correct orientation of forespore membrane extension during sporulation. Binds phosphatidylinositol 4-phosphate. The protein is Septin homolog spn2 (spn2) of Schizosaccharomyces pombe (strain 972 / ATCC 24843) (Fission yeast).